A 481-amino-acid chain; its full sequence is 2-methylisoborneol synthase (481 aa).

Disordered stretches follow at residues 1-125 (MPDS…PVGP) and 139-160 (QAAV…GPVV). Positions 11–23 (TSLPEQPPAPPAT) are enriched in pro residues. The segment covering 24-33 (APDAPAATVT) has biased composition (low complexity). 2 stretches are compositionally biased toward pro residues: residues 52 to 64 (VTRP…PSMP) and 71 to 104 (SSPP…PPAT). The span at 105-114 (APETSAATGS) shows a compositional bias: low complexity. Residues aspartate 238, aspartate 239, glutamate 243, asparagine 386, serine 390, and glutamate 394 each coordinate Mg(2+).

This sequence belongs to the terpene synthase family. 2-methylisoborneol synthase subfamily. Mg(2+) is required as a cofactor.

The enzyme catalyses (E)-2-methylgeranyl diphosphate + H2O = 2-methylisoborneol + diphosphate. Functionally, catalyzes the cyclization of 2-methylgeranyl diphosphate (2-MeGPP) to 2-methylisoborneol (2-MIB), which likely involves the intermediacy of 2-methyllinalyl diphosphate. The protein is 2-methylisoborneol synthase (tpc) of Streptomyces lasalocidi (Streptomyces lasaliensis).